Consider the following 150-residue polypeptide: Large ribosomal subunit protein bL9 (150 aa).

The protein belongs to the bacterial ribosomal protein bL9 family.

In terms of biological role, binds to the 23S rRNA. This is Large ribosomal subunit protein bL9 from Yersinia enterocolitica serotype O:8 / biotype 1B (strain NCTC 13174 / 8081).